Consider the following 508-residue polypeptide: Splicing regulatory glutamine/lysine-rich protein 1 (508 aa).

The region spanning 66-142 is the RRM domain; it reads RTVYVGNLNS…RPLKINHSNN (77 aa). Phosphoserine occurs at positions 171 and 184. Residues 173–508 form a disordered region; that stretch reads ISAAIEPESG…ENLSTKTEAV (336 aa). Residues 180–189 show a composition bias toward basic and acidic residues; it reads ESGKSNERKG. A compositionally biased stretch (basic residues) spans 190-259; the sequence is GRSRSHTRSK…KSRSRSHSRD (70 aa). Over residues 260-355 the composition is skewed to basic and acidic residues; it reads KRKDTREKIK…DRSKEIDEKR (96 aa). T363 bears the Phosphothreonine mark. The span at 372 to 388 shows a compositional bias: basic residues; it reads RRSRSSSRERRRRRSRS. Over residues 419–488 the composition is skewed to basic and acidic residues; the sequence is REKERDHISE…DAPRTEENKI (70 aa). The segment covering 489–508 has biased composition (polar residues); the sequence is QHNGNCQLNEENLSTKTEAV. Residue K504 forms a Glycyl lysine isopeptide (Lys-Gly) (interchain with G-Cter in SUMO2) linkage.

The protein belongs to the splicing factor SR family. Homodimer. Binds SFRS1, SFRS2, SFRS3 and SFRS6. Interacts with the spliceosome. Interacts with SREK1IP1.

It is found in the nucleus. Participates in the regulation of alternative splicing by modulating the activity of other splice facors. Inhibits the splicing activity of SFRS1, SFRS2 and SFRS6. Augments the splicing activity of SFRS3. This Homo sapiens (Human) protein is Splicing regulatory glutamine/lysine-rich protein 1 (SREK1).